We begin with the raw amino-acid sequence, 89 residues long: Cell division protein FtsL (89 aa).

Residues 1-22 (MIDRKHYHLVGSIGKDILNNGK) lie on the Cytoplasmic side of the membrane. The helical transmembrane segment at 23 to 40 (LPALLLIAVLASSSLVVI) threads the bilayer. The Periplasmic segment spans residues 41–89 (TTYQTRRLTVEREQLLLEQNILDIEWRNLILEDNVISDQSRFEFVATEQ).

The protein belongs to the FtsL family. As to quaternary structure, part of a complex composed of FtsB, FtsL and FtsQ.

The protein localises to the cell inner membrane. Essential cell division protein. May link together the upstream cell division proteins, which are predominantly cytoplasmic, with the downstream cell division proteins, which are predominantly periplasmic. The chain is Cell division protein FtsL from Moranella endobia (strain PCIT).